A 576-amino-acid chain; its full sequence is Arginine--tRNA ligase (576 aa).

A 'HIGH' region motif is present at residues 132 to 142 (ANPTGPMHIGH).

The protein belongs to the class-I aminoacyl-tRNA synthetase family. In terms of assembly, monomer.

It is found in the cytoplasm. The catalysed reaction is tRNA(Arg) + L-arginine + ATP = L-arginyl-tRNA(Arg) + AMP + diphosphate. This chain is Arginine--tRNA ligase, found in Ehrlichia ruminantium (strain Gardel).